We begin with the raw amino-acid sequence, 177 residues long: Phycoerythrin beta subunit (177 aa).

Tyr-18, Lys-28, Asn-35, and Asp-39 together coordinate (2R,3E)-phycoerythrobilin. 15,16-dihydrobiliverdin is bound by residues Cys-50, Asp-54, and Cys-61. (2R,3E)-phycoerythrobilin contacts are provided by Cys-82, Arg-84, and Asp-85. Arg-129 contacts 15,16-dihydrobiliverdin. Residue Asn-144 participates in (2R,3E)-phycoerythrobilin binding. The 15,16-dihydrobiliverdin site is built by Gln-148 and Lys-149. The (2R,3E)-phycoerythrobilin site is built by Pro-154, Gly-156, and Cys-158.

This sequence belongs to the phycobiliprotein family. In terms of assembly, heterotetramer of 2 different alpha chains and 2 identical beta chains which form 2 alpha-beta heterodimers within the heterotetramer. The two alpha-beta heterodimers are rotated to an open configuration in contrast to the closed configuration found in other cryptophyte species due to the insertion of a single amino acid, 'Asp-65', in a conserved region of the alpha chain. In the open form, the central chromophores are not in physical contact but are separated by a water-filled channel. In terms of processing, contains three phycoerythrobilin chromophores and one 15,16-dihydrobiliverdin chromophore with binding of the phycoerythrobilin chromophores mediated by both the alpha and beta subunits.

It is found in the plastid. The protein resides in the chloroplast thylakoid membrane. Light-harvesting photosynthetic bile pigment-protein from the phycobiliprotein complex. This chain is Phycoerythrin beta subunit, found in Hemiselmis andersenii (Cryptophyte alga).